The following is a 389-amino-acid chain: MHPVLRQMKPLPASVVKLEAESEGLARLQGGAAPEVHPRVQMKQEAAEAYIPASNVFRDNEGEEAEGLRHLKYESGRMLRKDHPSKRVLDERDFEKSPENGISAAEAHLKSADLVTAYEHTVKAEVNFQTTFNNNVRTLIAREEVVIGLMHLWDFVEAFLENPVSKALTAQLFLIVQHCRDEGVLRESLLNIAEPESRWLVDLLNLLQTIVVQERSLAVGEKVAAINYSVITLSKHYARKIFNSVFVPIDKEAKINTFYMRTVVQILVLSDDLGMYRNERIERAVSGARQRELNDRELMYRLREALTSNGLSEIEGGEDSARVRSKENWGAGAGVGAASARYPHLLDYEEKENPDGSVSFQQHERGTQSHENGGHAEPAYSRRQLGRFY.

Residues 1 to 131 (MHPVLRQMKP…VKAEVNFQTT (131 aa)) are interaction with packaging protein 1. Residues 350-389 (EKENPDGSVSFQQHERGTQSHENGGHAEPAYSRRQLGRFY) are disordered. The segment covering 362–374 (QHERGTQSHENGG) has biased composition (basic and acidic residues).

Belongs to the adenoviridae packaging protein 3 family. As to quaternary structure, part of the genome packaging complex composed of packaging proteins 1, 2 and 3; this complex specifically binds to the packaging sequence on the left end of viral genomic DNA and performs packaging of the viral genome. Interacts with hexon-linking protein IIIa; this interaction is required to promote correct genome packaging. Post-translationally, cleaved at different sites by the viral protease during virion maturation.

The protein localises to the host nucleus. Functionally, involved in viral genome packaging through its interaction with packaging proteins 1 and 2. After proteolytic cleavage by adenovirus protease, L1 52/55k protein is removed from the capsid during viral maturation. The polypeptide is Packaging protein 3 (Canine adenovirus serotype 1 (strain CLL) (CAdV-1)).